A 104-amino-acid polypeptide reads, in one-letter code: uncharacterized protein (104 aa).

Helical transmembrane passes span 26–46 (IGTGIIGVIGGILVVKGFTFF) and 70–90 (GLLGGIIGIATGFSITIIIAI).

It is found in the membrane. This is an uncharacterized protein from Acanthamoeba polyphaga mimivirus (APMV).